Here is a 333-residue protein sequence, read N- to C-terminus: Trans-1,2-dihydrobenzene-1,2-diol dehydrogenase (333 aa).

The protein belongs to the Gfo/Idh/MocA family. In terms of assembly, homodimer.

The enzyme catalyses (1R,2R)-1,2-dihydrobenzene-1,2-diol + NADP(+) = catechol + NADPH + H(+). It carries out the reaction D-xylose + NADP(+) = D-xylono-1,5-lactone + NADPH + H(+). The sequence is that of Trans-1,2-dihydrobenzene-1,2-diol dehydrogenase (Dhdh) from Mus musculus (Mouse).